Here is a 198-residue protein sequence, read N- to C-terminus: UPF0314 protein Atu8092 (198 aa).

A run of 3 helical transmembrane segments spans residues 14-34, 64-84, and 150-170; these read LRWF…LYAM, WYTP…WLLF, and VPVW…GWLI.

It belongs to the UPF0314 family.

It localises to the cell membrane. The sequence is that of UPF0314 protein Atu8092 from Agrobacterium fabrum (strain C58 / ATCC 33970) (Agrobacterium tumefaciens (strain C58)).